A 939-amino-acid chain; its full sequence is Isoleucine--tRNA ligase (939 aa).

The 'HIGH' region signature appears at 57 to 67 (PYANGHIHLGH). Glu-561 contacts L-isoleucyl-5'-AMP. The short motif at 602-606 (KMSKS) is the 'KMSKS' region element. ATP is bound at residue Lys-605. Residues Cys-903, Cys-906, Cys-923, and Cys-926 each contribute to the Zn(2+) site.

This sequence belongs to the class-I aminoacyl-tRNA synthetase family. IleS type 1 subfamily. Monomer. Requires Zn(2+) as cofactor.

The protein localises to the cytoplasm. It catalyses the reaction tRNA(Ile) + L-isoleucine + ATP = L-isoleucyl-tRNA(Ile) + AMP + diphosphate. Its function is as follows. Catalyzes the attachment of isoleucine to tRNA(Ile). As IleRS can inadvertently accommodate and process structurally similar amino acids such as valine, to avoid such errors it has two additional distinct tRNA(Ile)-dependent editing activities. One activity is designated as 'pretransfer' editing and involves the hydrolysis of activated Val-AMP. The other activity is designated 'posttransfer' editing and involves deacylation of mischarged Val-tRNA(Ile). The chain is Isoleucine--tRNA ligase from Desulfotalea psychrophila (strain LSv54 / DSM 12343).